The sequence spans 45 residues: Metallothionein-like protein 1C (45 aa).

This sequence belongs to the metallothionein superfamily. Type 15 family. As to expression, widely expressed at low levels.

In terms of biological role, metallothioneins have a high content of cysteine residues that bind various heavy metals. Confers tolerance to cadmium (Cd) and plays a role in Cd and zinc (Zn) homeostasis. This Arabidopsis thaliana (Mouse-ear cress) protein is Metallothionein-like protein 1C (MT1C).